A 79-amino-acid chain; its full sequence is Sec-independent protein translocase protein TatA (79 aa).

Residues 1-21 traverse the membrane as a helical segment; that stretch reads MGGISIWQLLIILVIVVLLFG. Residues 45–79 form a disordered region; the sequence is EEEKDADFEQKKQVEEKSAAEPVSTETQSDVKEKS. Residues 51-63 show a composition bias toward basic and acidic residues; sequence DFEQKKQVEEKSA.

The protein belongs to the TatA/E family. The Tat system comprises two distinct complexes: a TatABC complex, containing multiple copies of TatA, TatB and TatC subunits, and a separate TatA complex, containing only TatA subunits. Substrates initially bind to the TatABC complex, which probably triggers association of the separate TatA complex to form the active translocon.

It localises to the cell inner membrane. Functionally, part of the twin-arginine translocation (Tat) system that transports large folded proteins containing a characteristic twin-arginine motif in their signal peptide across membranes. TatA could form the protein-conducting channel of the Tat system. The sequence is that of Sec-independent protein translocase protein TatA from Alteromonas mediterranea (strain DSM 17117 / CIP 110805 / LMG 28347 / Deep ecotype).